The primary structure comprises 384 residues: Lipid-A-disaccharide synthase (384 aa).

It belongs to the LpxB family.

It catalyses the reaction a lipid X + a UDP-2-N,3-O-bis[(3R)-3-hydroxyacyl]-alpha-D-glucosamine = a lipid A disaccharide + UDP + H(+). It functions in the pathway bacterial outer membrane biogenesis; LPS lipid A biosynthesis. Functionally, condensation of UDP-2,3-diacylglucosamine and 2,3-diacylglucosamine-1-phosphate to form lipid A disaccharide, a precursor of lipid A, a phosphorylated glycolipid that anchors the lipopolysaccharide to the outer membrane of the cell. The polypeptide is Lipid-A-disaccharide synthase (Geobacter sulfurreducens (strain ATCC 51573 / DSM 12127 / PCA)).